The following is a 289-amino-acid chain: Glycerol facilitator-aquaporin gla (289 aa).

The next 2 membrane-spanning stretches (helical) occupy residues 10 to 30 (ITEF…VANV) and 41 to 61 (SWMI…VAFG). The NPA 1 signature appears at 68–70 (NPA). The next 3 membrane-spanning stretches (helical) occupy residues 87 to 107 (AQYI…IVMV), 151 to 171 (FLGS…FFGS), and 209 to 229 (MIAH…LGGP). The NPA 2 signature appears at 235-237 (NPA). The helical transmembrane segment at 264-284 (WYAWVPVLAPILASLAAVALF) threads the bilayer.

The protein belongs to the MIP/aquaporin (TC 1.A.8) family.

It is found in the cell membrane. Its function is as follows. Mixed channel protein that transports both water and glycerol. This Lactococcus lactis subsp. cremoris (Streptococcus cremoris) protein is Glycerol facilitator-aquaporin gla (gla).